A 259-amino-acid polypeptide reads, in one-letter code: Type III pantothenate kinase (259 aa).

6-13 (DVGNTNIV) is an ATP binding site. Substrate is bound by residues Y100 and 107 to 110 (GADR). The Proton acceptor role is filled by D109. D129 contacts K(+). T132 contributes to the ATP binding site. Residue T184 participates in substrate binding.

The protein belongs to the type III pantothenate kinase family. As to quaternary structure, homodimer. Requires NH4(+) as cofactor. K(+) serves as cofactor.

It localises to the cytoplasm. It catalyses the reaction (R)-pantothenate + ATP = (R)-4'-phosphopantothenate + ADP + H(+). Its pathway is cofactor biosynthesis; coenzyme A biosynthesis; CoA from (R)-pantothenate: step 1/5. Functionally, catalyzes the phosphorylation of pantothenate (Pan), the first step in CoA biosynthesis. This chain is Type III pantothenate kinase, found in Clostridium kluyveri (strain NBRC 12016).